We begin with the raw amino-acid sequence, 368 residues long: F-box only protein 28 (368 aa).

Over residues Met1–Glu11 the composition is skewed to basic and acidic residues. The tract at residues Met1 to Gln57 is disordered. Positions Glu12–Gly21 are enriched in gly residues. Over residues Leu32 to Ala52 the composition is skewed to pro residues. The region spanning Asn61 to Val109 is the F-box domain. A phosphoserine mark is found at Ser235 and Ser242. Thr270 carries the post-translational modification Phosphothreonine. Residues Met328–Lys368 form a disordered region. Ser344 carries the post-translational modification Phosphoserine.

As to quaternary structure, part of a SCF (SKP1-cullin-F-box) protein ligase complex.

The protein localises to the chromosome. It is found in the centromere. It localises to the kinetochore. Functionally, probably recognizes and binds to some phosphorylated proteins and promotes their ubiquitination and degradation. This is F-box only protein 28 (FBXO28) from Bos taurus (Bovine).